A 796-amino-acid chain; its full sequence is ATP-dependent DNA helicase PIF6 (796 aa).

Residues 197–230 (RPTGLPSAHSGGKLPKHMGGDELNPQLEGSTTPG) are disordered. Residue 255-262 (GSAGTGKT) coordinates ATP. A DNA-binding region spans residues 636–655 (QAYVALSRVRSREDLMLTAF). Disordered stretches follow at residues 692 to 719 (KGKT…PEEH) and 762 to 796 (TSSA…VDDD).

The protein belongs to the helicase family. PIF1 subfamily. As to quaternary structure, monomer. It depends on Mg(2+) as a cofactor.

Its subcellular location is the nucleus. The enzyme catalyses Couples ATP hydrolysis with the unwinding of duplex DNA at the replication fork by translocating in the 5'-3' direction. This creates two antiparallel DNA single strands (ssDNA). The leading ssDNA polymer is the template for DNA polymerase III holoenzyme which synthesizes a continuous strand.. The catalysed reaction is ATP + H2O = ADP + phosphate + H(+). DNA-dependent ATPase and 5'-3' DNA helicase required for the maintenance of genome stability. The protein is ATP-dependent DNA helicase PIF6 of Trypanosoma brucei brucei (strain 927/4 GUTat10.1).